We begin with the raw amino-acid sequence, 177 residues long: Large ribosomal subunit protein uL5 (177 aa).

The protein belongs to the universal ribosomal protein uL5 family. Part of the 50S ribosomal subunit; part of the 5S rRNA/L5/L18/L25 subcomplex. Contacts the 5S rRNA and the P site tRNA. Forms a bridge to the 30S subunit in the 70S ribosome.

Its function is as follows. This is one of the proteins that bind and probably mediate the attachment of the 5S RNA into the large ribosomal subunit, where it forms part of the central protuberance. In the 70S ribosome it contacts protein S13 of the 30S subunit (bridge B1b), connecting the 2 subunits; this bridge is implicated in subunit movement. Contacts the P site tRNA; the 5S rRNA and some of its associated proteins might help stabilize positioning of ribosome-bound tRNAs. The polypeptide is Large ribosomal subunit protein uL5 (Ehrlichia chaffeensis (strain ATCC CRL-10679 / Arkansas)).